The chain runs to 225 residues: Nucleolar protein 6 (225 aa).

Residues 1–75 (MGSEEDKKLT…GGKGKNGKKG (75 aa)) are disordered. The span at 9–20 (LTKKQLKAQQFR) shows a compositional bias: basic residues. Basic and acidic residues predominate over residues 21 to 42 (KSKEEKDQEKDVKKEQAPEGKR). Position 45 is a phosphoserine (serine 45). Residues 56–75 (KKKRKTRRGRGGKGKNGKKG) show a composition bias toward basic residues. Residues 78-155 (FIVFVGSLPR…KKINVELTVG (78 aa)) form the RRM domain. At serine 160 the chain carries Phosphoserine. Residues 187–225 (NDGNQKKIAKTTATAAQTSGTDNKPVPAGIHPDRAKLLK) are disordered.

The protein belongs to the RRM NOP6 family.

Its subcellular location is the nucleus. It localises to the nucleolus. Predicted to be involved in rRNA processing. This is Nucleolar protein 6 (NOP6) from Saccharomyces cerevisiae (strain ATCC 204508 / S288c) (Baker's yeast).